Reading from the N-terminus, the 87-residue chain is Kappa 1a-bungarotoxin (87 aa).

The N-terminal stretch at 1–21 (MKTLLLTLVVVTIVCLDLGYT) is a signal peptide. 5 cysteine pairs are disulfide-bonded: Cys-24–Cys-42, Cys-35–Cys-63, Cys-48–Cys-52, Cys-67–Cys-79, and Cys-80–Cys-85.

This sequence belongs to the three-finger toxin family. Long-chain subfamily. Kappa-neurotoxin sub-subfamily. Homo- and heterodimer; non-covalently linked. As to expression, expressed by the venom gland.

It is found in the secreted. Its function is as follows. Postsynaptic neurotoxin that binds and inhibits neuronal nicotinic acetylcholine receptors (nAChR) with high affinity (IC(50)&lt;100 nM). Is a selective, and slowly reversible antagonist of alpha-3/CHRNA3-containing and some alpha-4/CHRNA4-containing AChRs. The protein is Kappa 1a-bungarotoxin of Bungarus candidus (Malayan krait).